Consider the following 330-residue polypeptide: Ribosomal RNA small subunit methyltransferase C (330 aa).

It belongs to the methyltransferase superfamily. RsmC family. As to quaternary structure, monomer.

Its subcellular location is the cytoplasm. It catalyses the reaction guanosine(1207) in 16S rRNA + S-adenosyl-L-methionine = N(2)-methylguanosine(1207) in 16S rRNA + S-adenosyl-L-homocysteine + H(+). Its function is as follows. Specifically methylates the guanine in position 1207 of 16S rRNA in the 30S particle. The sequence is that of Ribosomal RNA small subunit methyltransferase C from Haemophilus influenzae (strain PittEE).